Consider the following 1859-residue polypeptide: U3 small nucleolar RNA-associated protein 10 (1859 aa).

A helical transmembrane segment spans residues 258 to 278 (LGAYSVLAVLSAVAPLSIELL). The HEAT 1 repeat unit spans residues 578 to 616 (VLPLLLIAFNDPSSHIRAAFAQLVQLVSEITKAIHENKK). A helical transmembrane segment spans residues 1392-1412 (IVIASISAIVSIVNVLGIKTL). One copy of the HEAT 2 repeat lies at 1819 to 1857 (LVPHIAELLEDDDEAVEIEVREGLVRVIEKVLGEPLDRY).

Belongs to the HEATR1/UTP10 family. In terms of assembly, component of the ribosomal small subunit (SSU) processome.

The protein localises to the nucleus. It localises to the nucleolus. Its subcellular location is the membrane. In terms of biological role, involved in nucleolar processing of pre-18S ribosomal RNA. Involved in ribosome biosynthesis. The chain is U3 small nucleolar RNA-associated protein 10 from Lodderomyces elongisporus (strain ATCC 11503 / CBS 2605 / JCM 1781 / NBRC 1676 / NRRL YB-4239) (Yeast).